We begin with the raw amino-acid sequence, 296 residues long: uncharacterized protein (296 aa).

CBS domains follow at residues 176 to 232 and 236 to 292; these read GIKE…DKKV and MRRD…KFPE.

This is an uncharacterized protein from Methanocaldococcus jannaschii (strain ATCC 43067 / DSM 2661 / JAL-1 / JCM 10045 / NBRC 100440) (Methanococcus jannaschii).